The primary structure comprises 415 residues: Probable peptidoglycan glycosyltransferase FtsW (415 aa).

A run of 11 helical transmembrane segments spans residues 31–51 (PILMVAVLALLAWGLVMVTSA), 63–83 (FFFVIRQTIAVVIGASITVWL), 97–117 (LWILIASLLLLLVVLLPGIGH), 133–153 (IQVSEFARLGLIIWMAGYIAT), 162–182 (ITGMLGPGVVIFAASLLLLLQ), 185–205 (FGTTAVLAATLFAMAWLARAQ), 206–226 (WQMMVGSTLVMGVLGVFVVLS), 245–265 (FGHGYQLANALIAIGTGGVWG), 285–305 (FIFAVLAEELGLIGVIALIGL), 326–346 (IAGAALAWGISVWIGMQALIN), and 361–381 (LPLMSYGGSAMIVALISLGFL).

Belongs to the SEDS family. FtsW subfamily.

Its subcellular location is the cell inner membrane. It catalyses the reaction [GlcNAc-(1-&gt;4)-Mur2Ac(oyl-L-Ala-gamma-D-Glu-L-Lys-D-Ala-D-Ala)](n)-di-trans,octa-cis-undecaprenyl diphosphate + beta-D-GlcNAc-(1-&gt;4)-Mur2Ac(oyl-L-Ala-gamma-D-Glu-L-Lys-D-Ala-D-Ala)-di-trans,octa-cis-undecaprenyl diphosphate = [GlcNAc-(1-&gt;4)-Mur2Ac(oyl-L-Ala-gamma-D-Glu-L-Lys-D-Ala-D-Ala)](n+1)-di-trans,octa-cis-undecaprenyl diphosphate + di-trans,octa-cis-undecaprenyl diphosphate + H(+). The protein operates within cell wall biogenesis; peptidoglycan biosynthesis. Functionally, peptidoglycan polymerase that is essential for cell division. The chain is Probable peptidoglycan glycosyltransferase FtsW from Halothiobacillus neapolitanus (strain ATCC 23641 / c2) (Thiobacillus neapolitanus).